The sequence spans 208 residues: Guanylate kinase (208 aa).

In terms of domain architecture, Guanylate kinase-like spans 4–185 (GNLYILSAPS…TLKDLQSILQ (182 aa)). Residue 11-18 (APSGAGKS) participates in ATP binding.

It belongs to the guanylate kinase family.

It is found in the cytoplasm. The catalysed reaction is GMP + ATP = GDP + ADP. In terms of biological role, essential for recycling GMP and indirectly, cGMP. The sequence is that of Guanylate kinase from Haemophilus influenzae (strain 86-028NP).